Reading from the N-terminus, the 357-residue chain is Histidinol-phosphate aminotransferase (357 aa).

Residue lysine 221 is modified to N6-(pyridoxal phosphate)lysine.

It belongs to the class-II pyridoxal-phosphate-dependent aminotransferase family. Histidinol-phosphate aminotransferase subfamily. It depends on pyridoxal 5'-phosphate as a cofactor.

The catalysed reaction is L-histidinol phosphate + 2-oxoglutarate = 3-(imidazol-4-yl)-2-oxopropyl phosphate + L-glutamate. Its pathway is amino-acid biosynthesis; L-histidine biosynthesis; L-histidine from 5-phospho-alpha-D-ribose 1-diphosphate: step 7/9. The protein is Histidinol-phosphate aminotransferase (hisC) of Sulfurisphaera tokodaii (strain DSM 16993 / JCM 10545 / NBRC 100140 / 7) (Sulfolobus tokodaii).